A 361-amino-acid chain; its full sequence is Caffeic acid 3-O-methyltransferase 2 (361 aa).

128 to 134 (MNQDKVL) serves as a coordination point for substrate. Residues 160-178 (AFEYHGTDPRFNKVFNQGM) form a substrate binding region. Positions 206, 229, 249, 250, and 263 each coordinate S-adenosyl-L-methionine. The Proton acceptor role is filled by histidine 267.

It belongs to the class I-like SAM-binding methyltransferase superfamily. Cation-independent O-methyltransferase family. COMT subfamily. As to quaternary structure, homodimer.

It catalyses the reaction (E)-caffeate + S-adenosyl-L-methionine = (E)-ferulate + S-adenosyl-L-homocysteine + H(+). It participates in aromatic compound metabolism; phenylpropanoid biosynthesis. In terms of biological role, catalyzes the conversion of caffeic acid to ferulic acid and of 5-hydroxyferulic acid to sinapic acid. The resulting products may subsequently be converted to the corresponding alcohols that are incorporated into lignins. In Ocimum basilicum (Sweet basil), this protein is Caffeic acid 3-O-methyltransferase 2 (COMT2).